We begin with the raw amino-acid sequence, 346 residues long: Low specificity L-threonine aldolase (346 aa).

An N6-(pyridoxal phosphate)lysine modification is found at Lys207.

This sequence belongs to the threonine aldolase family. Homotetramer. The cofactor is pyridoxal 5'-phosphate.

The catalysed reaction is L-threonine = acetaldehyde + glycine. The enzyme catalyses L-allo-threonine = acetaldehyde + glycine. Functionally, catalyzes the cleavage of L-allo-threonine and L-threonine to glycine and acetaldehyde. Can also act on L-erythro-phenylserine, L-threo-phenylserine, L-beta-3,4-methylenedioxyphenylserine and L-beta-3,4-dihydroxyphenylserine. In Pseudomonas sp. (strain NCIMB 10558), this protein is Low specificity L-threonine aldolase (ltaE).